Consider the following 506-residue polypeptide: ATP synthase subunit alpha, chloroplastic (506 aa).

Residue 170-177 (GDRQTGKT) coordinates ATP.

It belongs to the ATPase alpha/beta chains family. As to quaternary structure, F-type ATPases have 2 components, CF(1) - the catalytic core - and CF(0) - the membrane proton channel. CF(1) has five subunits: alpha(3), beta(3), gamma(1), delta(1), epsilon(1). CF(0) has four main subunits: a, b, b' and c.

Its subcellular location is the plastid. It is found in the chloroplast thylakoid membrane. It catalyses the reaction ATP + H2O + 4 H(+)(in) = ADP + phosphate + 5 H(+)(out). Its function is as follows. Produces ATP from ADP in the presence of a proton gradient across the membrane. The alpha chain is a regulatory subunit. The polypeptide is ATP synthase subunit alpha, chloroplastic (Chlorella vulgaris (Green alga)).